The sequence spans 1650 residues: Transmembrane domain-containing protein DDB_G0287209 (1650 aa).

The stretch at 194–225 (NNNNNNFNNNNNNNNNNNNNKNNYNNNKSNLI) forms a coiled coil. Disordered stretches follow at residues 197-216 (NNNF…NKNN) and 1218-1296 (ENQF…NINN). Over residues 1224–1284 (NNNENSGSSG…SNSNENNYNG (61 aa)) the composition is skewed to low complexity. The next 9 membrane-spanning stretches (helical) occupy residues 1314–1334 (PLLL…LSLF), 1347–1369 (ILFL…LQLF), 1390–1410 (ISIS…DVTS), 1454–1474 (WNIY…LIVP), 1489–1509 (ILFI…VILF), 1515–1535 (WWDL…VTLL), 1539–1559 (PVYF…QFAF), 1570–1590 (VENL…TSII), and 1595–1615 (FNLI…ITII).

Its subcellular location is the membrane. This chain is Transmembrane domain-containing protein DDB_G0287209, found in Dictyostelium discoideum (Social amoeba).